The primary structure comprises 75 residues: UPF0270 protein PSEEN1465 (75 aa).

It belongs to the UPF0270 family.

This is UPF0270 protein PSEEN1465 from Pseudomonas entomophila (strain L48).